The chain runs to 395 residues: Elongation factor Tu (395 aa).

Positions 10-204 (KPHVNIGTIG…AVDSYIPTPE (195 aa)) constitute a tr-type G domain. The interval 19 to 26 (GHVDHGKT) is G1. 19-26 (GHVDHGKT) contacts GTP. Thr26 provides a ligand contact to Mg(2+). Residues 60–64 (GITIS) are G2. The interval 81 to 84 (DCPG) is G3. GTP-binding positions include 81–85 (DCPGH) and 136–139 (NKCD). Residues 136–139 (NKCD) are G4. Positions 174–176 (SAL) are G5.

This sequence belongs to the TRAFAC class translation factor GTPase superfamily. Classic translation factor GTPase family. EF-Tu/EF-1A subfamily. Monomer. Phosphorylated on serine and/or threonine residue(s). Dephosphorylated by stp.

It is found in the cytoplasm. The enzyme catalyses GTP + H2O = GDP + phosphate + H(+). GTP hydrolase that promotes the GTP-dependent binding of aminoacyl-tRNA to the A-site of ribosomes during protein biosynthesis. The polypeptide is Elongation factor Tu (Listeria innocua serovar 6a (strain ATCC BAA-680 / CLIP 11262)).